A 163-amino-acid polypeptide reads, in one-letter code: E3 ubiquitin-protein ligase ATL23 (163 aa).

The chain crosses the membrane as a helical span at residues 35–55; the sequence is ALLLPCVGMCIVFLIYLFLLW. The RING-type; atypical zinc-finger motif lies at 104–146; the sequence is CAVCLEDIESGQSTRLVPGCNHGFHQLCADTWLSNHTVCPVCR.

Belongs to the RING-type zinc finger family. ATL subfamily.

It is found in the membrane. The catalysed reaction is S-ubiquitinyl-[E2 ubiquitin-conjugating enzyme]-L-cysteine + [acceptor protein]-L-lysine = [E2 ubiquitin-conjugating enzyme]-L-cysteine + N(6)-ubiquitinyl-[acceptor protein]-L-lysine.. It participates in protein modification; protein ubiquitination. Its function is as follows. E3 ubiquitin-protein ligase able to catalyze polyubiquitination with ubiquitin-conjugating enzyme E2 UBC8, UBC10, UBC11, UBC28 and UBC29 in vitro. The protein is E3 ubiquitin-protein ligase ATL23 (ATL23) of Arabidopsis thaliana (Mouse-ear cress).